Here is a 160-residue protein sequence, read N- to C-terminus: Lipoprotein signal peptidase (160 aa).

3 helical membrane-spanning segments follow: residues isoleucine 13 to isoleucine 33, tryptophan 72 to leucine 92, and serine 104 to valine 124. Active-site residues include aspartate 125 and aspartate 143. The chain crosses the membrane as a helical span at residues tryptophan 134 to methionine 154.

This sequence belongs to the peptidase A8 family.

Its subcellular location is the cell inner membrane. The catalysed reaction is Release of signal peptides from bacterial membrane prolipoproteins. Hydrolyzes -Xaa-Yaa-Zaa-|-(S,diacylglyceryl)Cys-, in which Xaa is hydrophobic (preferably Leu), and Yaa (Ala or Ser) and Zaa (Gly or Ala) have small, neutral side chains.. The protein operates within protein modification; lipoprotein biosynthesis (signal peptide cleavage). In terms of biological role, this protein specifically catalyzes the removal of signal peptides from prolipoproteins. The protein is Lipoprotein signal peptidase of Buchnera aphidicola subsp. Acyrthosiphon pisum (strain APS) (Acyrthosiphon pisum symbiotic bacterium).